A 421-amino-acid chain; its full sequence is 4-hydroxy-3-methylbut-2-en-1-yl diphosphate synthase (flavodoxin) (421 aa).

The [4Fe-4S] cluster site is built by Cys-298, Cys-301, Cys-344, and Glu-351.

It belongs to the IspG family. Requires [4Fe-4S] cluster as cofactor.

The catalysed reaction is (2E)-4-hydroxy-3-methylbut-2-enyl diphosphate + oxidized [flavodoxin] + H2O + 2 H(+) = 2-C-methyl-D-erythritol 2,4-cyclic diphosphate + reduced [flavodoxin]. Its pathway is isoprenoid biosynthesis; isopentenyl diphosphate biosynthesis via DXP pathway; isopentenyl diphosphate from 1-deoxy-D-xylulose 5-phosphate: step 5/6. In terms of biological role, converts 2C-methyl-D-erythritol 2,4-cyclodiphosphate (ME-2,4cPP) into 1-hydroxy-2-methyl-2-(E)-butenyl 4-diphosphate. This Neisseria gonorrhoeae (strain ATCC 700825 / FA 1090) protein is 4-hydroxy-3-methylbut-2-en-1-yl diphosphate synthase (flavodoxin).